Here is a 156-residue protein sequence, read N- to C-terminus: Small ribosomal subunit protein uS7c (156 aa).

The protein belongs to the universal ribosomal protein uS7 family. As to quaternary structure, part of the 30S ribosomal subunit.

Its subcellular location is the plastid. The protein resides in the chloroplast. Functionally, one of the primary rRNA binding proteins, it binds directly to 16S rRNA where it nucleates assembly of the head domain of the 30S subunit. In Bowenia serrulata (Byfield fern), this protein is Small ribosomal subunit protein uS7c (rps7).